A 556-amino-acid polypeptide reads, in one-letter code: PPE family protein PPE2 (556 aa).

Residues 8–164 (ASPPEVHSAL…ASYQAVSTAA (157 aa)) are PPE. The tract at residues 201 to 256 (QKIGYTDFYNNVIQPFINWLTNLPFLQAMFSGFDPWLPSLGNPLTFLSPANIAFAL) is SH3-like. Residues 319-340 (LEQTLALLPAALPLLAAPLAPL) are leucine zipper motif. Disordered regions lie at residues 385 to 418 (TPTP…PPVT) and 443 to 556 (GTGV…TRVE). Residues 400–417 (PTPPLGPPPPPVTAPPPV) are compositionally biased toward pro residues. Residues 456 to 471 (AEAPASAAAPEEQVQP) are compositionally biased toward low complexity. Over residues 472-481 (QRRRRPKIKQ) the composition is skewed to basic residues. Positions 473-481 (RRRRPKIKQ) match the Nuclear localization signal motif.

This sequence belongs to the mycobacterial PPE family.

The protein resides in the secreted. It localises to the host cytoplasm. The protein localises to the host nucleus. In terms of biological role, inhibits nitric oxide (NO) production in activated macrophages. Acts by inhibiting expression of the host inducible nitric oxide synthase (iNOS). PPE2 is translocated into the host macrophage nucleus, where it interacts with a GATA-binding site overlapping with the TATA box of NOS2 (iNOS) promoter, and strongly inhibits NOS2 gene transcription. Reduction in NO production in turn facilitates intracellular survival of the bacilli inside the macrophage. In addition, disrupts the assembly of NADPH oxidase complex, which inhibits NADPH oxidase-mediated reactive oxygen species (ROS) generation in macrophages and favors M.tuberculosis survival. Acts by interacting with NCF2, the cytosolic subunit of NADPH oxidase, and preventing translocation of NCF2 and NCF1 to the membrane, which causes a reduction of the functional assembly of NADPH oxidase complex and a decrease in NADPH oxidase activity. The protein is PPE family protein PPE2 (PPE2) of Mycobacterium tuberculosis (strain CDC 1551 / Oshkosh).